The following is a 218-amino-acid chain: Ras-related protein RabT2 (218 aa).

Gly-32–Gly-39 lines the GTP pocket. Residues Val-54–Phe-61 carry the Effector region motif. GTP contacts are provided by residues Asp-80–Cys-84 and Asn-140–Asp-143. A Cysteine methyl ester modification is found at Cys-215. Residue Cys-215 is the site of S-geranylgeranyl cysteine attachment. Residues Asn-216–Leu-218 constitute a propeptide, removed in mature form.

It belongs to the small GTPase superfamily. Rab family.

The protein resides in the cell membrane. The sequence is that of Ras-related protein RabT2 (rabT2) from Dictyostelium discoideum (Social amoeba).